We begin with the raw amino-acid sequence, 101 residues long: MFVKKGDKVRVIAGKDKGVEALVVTALPKVNKVVVEGVNIVKKHQKPNNEHPQGAIVEKEAPIHVSNVQVLDKNGVAGRVGYKFVDGKKVRYNKKSGEVLD.

It belongs to the universal ribosomal protein uL24 family. Part of the 50S ribosomal subunit.

Functionally, one of two assembly initiator proteins, it binds directly to the 5'-end of the 23S rRNA, where it nucleates assembly of the 50S subunit. Its function is as follows. One of the proteins that surrounds the polypeptide exit tunnel on the outside of the subunit. The protein is Large ribosomal subunit protein uL24 of Streptococcus gordonii (strain Challis / ATCC 35105 / BCRC 15272 / CH1 / DL1 / V288).